We begin with the raw amino-acid sequence, 610 residues long: DNA mismatch repair protein MutL (610 aa).

It belongs to the DNA mismatch repair MutL/HexB family.

Functionally, this protein is involved in the repair of mismatches in DNA. It is required for dam-dependent methyl-directed DNA mismatch repair. May act as a 'molecular matchmaker', a protein that promotes the formation of a stable complex between two or more DNA-binding proteins in an ATP-dependent manner without itself being part of a final effector complex. The polypeptide is DNA mismatch repair protein MutL (Rickettsia rickettsii (strain Iowa)).